The chain runs to 464 residues: ATP-dependent protease ATPase subunit HslU (464 aa).

Residues Val18, 60 to 65, Asp277, Glu342, and Arg414 contribute to the ATP site; that span reads GVGKTE.

This sequence belongs to the ClpX chaperone family. HslU subfamily. In terms of assembly, a double ring-shaped homohexamer of HslV is capped on each side by a ring-shaped HslU homohexamer. The assembly of the HslU/HslV complex is dependent on binding of ATP.

It is found in the cytoplasm. Its function is as follows. ATPase subunit of a proteasome-like degradation complex; this subunit has chaperone activity. The binding of ATP and its subsequent hydrolysis by HslU are essential for unfolding of protein substrates subsequently hydrolyzed by HslV. HslU recognizes the N-terminal part of its protein substrates and unfolds these before they are guided to HslV for hydrolysis. The sequence is that of ATP-dependent protease ATPase subunit HslU from Lactobacillus delbrueckii subsp. bulgaricus (strain ATCC 11842 / DSM 20081 / BCRC 10696 / JCM 1002 / NBRC 13953 / NCIMB 11778 / NCTC 12712 / WDCM 00102 / Lb 14).